Consider the following 1763-residue polypeptide: Genome polyprotein (1763 aa).

In terms of domain architecture, SF3 helicase spans 458–614; the sequence is DGVITSCNKR…ESHKRARPGT (157 aa). 484-491 provides a ligand contact to ATP; that stretch reads GPPGCGKT. O-(5'-phospho-RNA)-tyrosine is present on Y984. The Peptidase C24 domain maps to 1073–1229; that stretch reads GPGTKFHKNA…KLVVPYVHID (157 aa). Residues H1110, E1131, and C1193 each act as for 3CLpro activity in the active site. The RdRp catalytic domain maps to 1478–1603; the sequence is AKVYAVDYSK…MFPTMFASIS (126 aa).

In terms of assembly, protein p32: Homodimer. Interacts with NTPase, protein p30 and protease-polymerase p76. As to quaternary structure, interacts with capsid protein VP1 and protease-polymerase p76. Homooligomer. Interacts with Vpg, protein p32 and may interact with capsid protein VP1. Specific enzymatic cleavages in vivo yield mature proteins. Pro-Pol is first autocatalytically cleaved, then processes the whole polyprotein. Post-translationally, VPg is uridylylated by the polymerase and is covalently attached to the 5'-end of the polyadenylated genomic and subgenomic RNAs. This uridylylated form acts as a nucleotide-peptide primer for the polymerase.

It carries out the reaction a ribonucleoside 5'-triphosphate + H2O = a ribonucleoside 5'-diphosphate + phosphate + H(+). It catalyses the reaction RNA(n) + a ribonucleoside 5'-triphosphate = RNA(n+1) + diphosphate. The enzyme catalyses Endopeptidase with a preference for cleavage when the P1 position is occupied by Glu-|-Xaa and the P1' position is occupied by Gly-|-Yaa.. Functionally, NTPase presumably plays a role in replication. Despite having similarities with helicases, does not seem to display any helicase activity. In terms of biological role, viral genome-linked protein is covalently linked to the 5'-end of the positive-strand, negative-strand genomic RNAs and subgenomic RNA. Acts as a genome-linked replication primer. May recruit ribosome to viral RNA thereby promoting viral proteins translation. Its function is as follows. The protease activity processes the polyprotein: Pro-Pol is first released by autocleavage, then all other proteins are cleaved. Cleaves host translation initiation factor eIF4G1, eIF4G2 and PABP1 thereby inducing a shutdown of host protein synthesis. This shutdown may not prevent viral mRNA from being translated since viral Vpg replaces the cap. May cleave host polyadenylate-binding protein thereby inhibiting cellular translation. Seems to act as a RNase and degrades host Pol II-driven mRNAs with the help of host XRN1. Inhibits the integrated stress response (ISR) in the infected cell by cleaving host G3BP1 and G3BP2. Stress granule formation is thus inhibited, which allows protein synthesis and viral replication. The RNA-directed RNA polymerase activity replicates genomic and antigenomic viral RNA by recognizing specific signals. Also transcribes a subgenomic mRNA by initiating RNA synthesis internally on antigenomic RNA. This sgRNA codes for structural proteins. Catalyzes the covalent attachment VPg with viral RNAs. Selectively decays the mRNA of host interferon receptor IFNAR1. The sequence is that of Genome polyprotein from Feline calicivirus (FCV).